Here is a 595-residue protein sequence, read N- to C-terminus: Aspartate--tRNA ligase (595 aa).

Position 171 (Glu171) interacts with L-aspartate. The segment at Gln195–Lys198 is aspartate. Arg217 provides a ligand contact to L-aspartate. ATP contacts are provided by residues Arg217–Glu219 and Gln226. His448 contacts L-aspartate. Glu482 contributes to the ATP binding site. Arg489 is a binding site for L-aspartate. Gly534–Arg537 lines the ATP pocket.

This sequence belongs to the class-II aminoacyl-tRNA synthetase family. Type 1 subfamily. As to quaternary structure, homodimer.

It localises to the cytoplasm. The enzyme catalyses tRNA(Asp) + L-aspartate + ATP = L-aspartyl-tRNA(Asp) + AMP + diphosphate. Catalyzes the attachment of L-aspartate to tRNA(Asp) in a two-step reaction: L-aspartate is first activated by ATP to form Asp-AMP and then transferred to the acceptor end of tRNA(Asp). This chain is Aspartate--tRNA ligase, found in Erwinia tasmaniensis (strain DSM 17950 / CFBP 7177 / CIP 109463 / NCPPB 4357 / Et1/99).